A 141-amino-acid polypeptide reads, in one-letter code: Large ribosomal subunit protein uL16c (141 aa).

Positions 1–17 are enriched in basic residues; sequence MLSPRRTKYRKQHRGRL. The segment at 1–20 is disordered; sequence MLSPRRTKYRKQHRGRLKGT.

This sequence belongs to the universal ribosomal protein uL16 family. As to quaternary structure, part of the 50S ribosomal subunit.

The protein resides in the plastid. Its subcellular location is the chloroplast. This chain is Large ribosomal subunit protein uL16c, found in Staurastrum punctulatum (Green alga).